The following is a 182-amino-acid chain: Ribosome hibernation promotion factor (182 aa).

The protein belongs to the HPF/YfiA ribosome-associated protein family. Long HPF subfamily. As to quaternary structure, interacts with 100S ribosomes.

The protein resides in the cytoplasm. Functionally, required for dimerization of active 70S ribosomes into 100S ribosomes in stationary phase; 100S ribosomes are translationally inactive and sometimes present during exponential growth. This chain is Ribosome hibernation promotion factor, found in Streptococcus pyogenes serotype M6 (strain ATCC BAA-946 / MGAS10394).